The sequence spans 614 residues: Replication protein A 70 kDa DNA-binding subunit (614 aa).

The tract at residues G112 to Q178 is disordered. 2 stretches are compositionally biased toward polar residues: residues G120–T130 and P158–Q178. A DNA-binding region (OB) is located at residues W194–N278. The C4-type zinc-finger motif lies at C478–C500.

Belongs to the replication factor A protein 1 family. Component of the heterotrimeric canonical replication protein A complex (RPA).

The protein resides in the nucleus. It is found in the PML body. In terms of biological role, as part of the heterotrimeric replication protein A complex (RPA/RP-A), binds and stabilizes single-stranded DNA intermediates, that form during DNA replication or upon DNA stress. It prevents their reannealing and in parallel, recruits and activates different proteins and complexes involved in DNA metabolism. Thereby, it plays an essential role both in DNA replication and the cellular response to DNA damage. The protein is Replication protein A 70 kDa DNA-binding subunit (RPA1) of Gallus gallus (Chicken).